The following is a 451-amino-acid chain: Molybdate-anion transporter (451 aa).

12 helical membrane passes run 1-21 (MLVTAYLFLLGLLALWGVLEF), 45-65 (YDFYRTYFPALAADWLQGPYL), 79-99 (IAIIYVCGFGASVFAGLVSVP), 130-150 (FVLMTGRVLGGFSSSLLFSCF), 180-200 (NGGIAIAAGITANVCAEWLGL), 201-221 (GPASPSVLAVPLLVLSVVLVI), 251-271 (VLLLGTIQALFESVVYIFIFL), 281-301 (APLGIAFSSFMAASAVGSSLY), 316-336 (VLCLSILMVFFSLFMLTFSTA), 346-366 (LLAFLLIELACGLYFPAMRFL), 378-398 (GVLNWFRVPLNLLAGLGLLVL), and 410-430 (MFSLCAVTMLLALLCVVSLFT).

It belongs to the major facilitator superfamily.

The protein localises to the cell membrane. Mediates high-affinity intracellular uptake of the rare oligo-element molybdenum. This Xenopus laevis (African clawed frog) protein is Molybdate-anion transporter (mfsd5).